The following is a 304-amino-acid chain: MSWIERILNKSNITQTRKASIPEGVWTKCDSCGQVLYRAELERNLEVCPKCDHHMRMSARARLHMLLDAGSEVELGSELEPKDILKFRDSKKYKDRISAAQKDTGEKDALVAMKGTLQGMPIVAASFEFAFMGGSMASVVGARFVRAVEQALEDNCPLVCFSSSGGARMQEALMSLMQMAKTSAALAKMQERGLPYISVLTDPTMGGVSASLAMLGDINIAEPKALIGFAGPRVIEQTVREKLPPGFQRSEFLIEKGAIDMIVRRPVMRQTLASILSKLTHQPQPSVVESKADTVAQPENQADV.

Residues 25–294 form the CoA carboxyltransferase N-terminal domain; that stretch reads VWTKCDSCGQ…PSVVESKADT (270 aa). Residues cysteine 29, cysteine 32, cysteine 48, and cysteine 51 each coordinate Zn(2+). A C4-type zinc finger spans residues 29 to 51; sequence CDSCGQVLYRAELERNLEVCPKC.

Belongs to the AccD/PCCB family. Acetyl-CoA carboxylase is a heterohexamer composed of biotin carboxyl carrier protein (AccB), biotin carboxylase (AccC) and two subunits each of ACCase subunit alpha (AccA) and ACCase subunit beta (AccD). The cofactor is Zn(2+).

It localises to the cytoplasm. The catalysed reaction is N(6)-carboxybiotinyl-L-lysyl-[protein] + acetyl-CoA = N(6)-biotinyl-L-lysyl-[protein] + malonyl-CoA. Its pathway is lipid metabolism; malonyl-CoA biosynthesis; malonyl-CoA from acetyl-CoA: step 1/1. Functionally, component of the acetyl coenzyme A carboxylase (ACC) complex. Biotin carboxylase (BC) catalyzes the carboxylation of biotin on its carrier protein (BCCP) and then the CO(2) group is transferred by the transcarboxylase to acetyl-CoA to form malonyl-CoA. The chain is Acetyl-coenzyme A carboxylase carboxyl transferase subunit beta from Yersinia pseudotuberculosis serotype O:1b (strain IP 31758).